The primary structure comprises 316 residues: Cell division protein ZipA (316 aa).

At 1-5 (MQELR) the chain is on the periplasmic side. A helical membrane pass occupies residues 6–26 (FVLIVVGALAIAALLFHGLWS). Topologically, residues 27–316 (SKKEGKAKFG…QIVEFNAANA (290 aa)) are cytoplasmic. The disordered stretch occupies residues 36–65 (GNKPLGKLDVDQGDKDSVEQERSFAPATED). Residues 41–57 (GKLDVDQGDKDSVEQER) show a composition bias toward basic and acidic residues.

This sequence belongs to the ZipA family. As to quaternary structure, interacts with FtsZ via their C-terminal domains.

Its subcellular location is the cell inner membrane. Functionally, essential cell division protein that stabilizes the FtsZ protofilaments by cross-linking them and that serves as a cytoplasmic membrane anchor for the Z ring. Also required for the recruitment to the septal ring of downstream cell division proteins. The polypeptide is Cell division protein ZipA (Vibrio parahaemolyticus serotype O3:K6 (strain RIMD 2210633)).